Here is an 865-residue protein sequence, read N- to C-terminus: Nitrogen regulatory protein nrfA (865 aa).

Disordered stretches follow at residues 1–75 (MEGI…DEMQ), 115–140 (RKEREQQEREQQARASETVSPAPSGI), 177–227 (FDSP…QDQR), 557–605 (GSTD…RTAS), and 617–663 (LNGS…AGPT). Over residues 32–46 (DDFTFDSPFSSSGSS) the composition is skewed to low complexity. Composition is skewed to basic and acidic residues over residues 115 to 126 (RKEREQQEREQQ) and 180 to 189 (PAEHPSHPSA). Residues 582 to 592 (ASVSDVRNQNQ) show a composition bias toward polar residues. Residues 665 to 689 (CTNCFTQTTPLWRRNPEGQPLCNAC) form a GATA-type zinc finger. The disordered stretch occupies residues 713-854 (NRSSANTLAV…NHSIAGGQGA (142 aa)). Polar residues-rich tracts occupy residues 715-724 (SSANTLAVGT) and 737-764 (IQHAPSTSISSRINTSESPPSMTGSNTL). Composition is skewed to low complexity over residues 771-786 (PIAAAPPKSGPPAGVA) and 830-844 (PLAPAMAPPAAANPA).

It is found in the nucleus. In terms of biological role, major nitrogen regulatory protein. The chain is Nitrogen regulatory protein nrfA (nrfA) from Penicillium urticae.